A 349-amino-acid chain; its full sequence is Ribosomal RNA large subunit methyltransferase M (349 aa).

S-adenosyl-L-methionine-binding positions include serine 183, 216–219 (APGG), aspartate 235, aspartate 255, and aspartate 271. The active-site Proton acceptor is the lysine 300.

It belongs to the class I-like SAM-binding methyltransferase superfamily. RNA methyltransferase RlmE family. RlmM subfamily. Monomer.

It is found in the cytoplasm. The enzyme catalyses cytidine(2498) in 23S rRNA + S-adenosyl-L-methionine = 2'-O-methylcytidine(2498) in 23S rRNA + S-adenosyl-L-homocysteine + H(+). In terms of biological role, catalyzes the 2'-O-methylation at nucleotide C2498 in 23S rRNA. This is Ribosomal RNA large subunit methyltransferase M from Stutzerimonas stutzeri (strain A1501) (Pseudomonas stutzeri).